The chain runs to 147 residues: uncharacterized protein (147 aa).

Residues 1–37 (MVALFKSSLGRPEQHQTPQIRISPASSNVEHSEKQPR) form a disordered region. Residues 15-29 (HQTPQIRISPASSNV) are compositionally biased toward polar residues. The Cytochrome b5 heme-binding domain occupies 71-147 (PIPVTKEELA…LKTSFVGFLV (77 aa)). Positions 106 and 129 each coordinate heme.

This sequence belongs to the cytochrome b5 family.

This is an uncharacterized protein from Schizosaccharomyces pombe (strain 972 / ATCC 24843) (Fission yeast).